An 80-amino-acid polypeptide reads, in one-letter code: NAD(P)H-quinone oxidoreductase subunit O (80 aa).

Belongs to the complex I NdhO subunit family. As to quaternary structure, NDH-1 can be composed of about 15 different subunits; different subcomplexes with different compositions have been identified which probably have different functions.

Its subcellular location is the cellular thylakoid membrane. The catalysed reaction is a plastoquinone + NADH + (n+1) H(+)(in) = a plastoquinol + NAD(+) + n H(+)(out). It carries out the reaction a plastoquinone + NADPH + (n+1) H(+)(in) = a plastoquinol + NADP(+) + n H(+)(out). In terms of biological role, NDH-1 shuttles electrons from an unknown electron donor, via FMN and iron-sulfur (Fe-S) centers, to quinones in the respiratory and/or the photosynthetic chain. The immediate electron acceptor for the enzyme in this species is believed to be plastoquinone. Couples the redox reaction to proton translocation, and thus conserves the redox energy in a proton gradient. Cyanobacterial NDH-1 also plays a role in inorganic carbon-concentration. This chain is NAD(P)H-quinone oxidoreductase subunit O, found in Prochlorococcus marinus (strain MIT 9515).